Reading from the N-terminus, the 304-residue chain is Arginine-binding protein ArgT (304 aa).

Positions 1–26 (MRFPKIPKRAVAATVGIVATSFTLAS) are cleaved as a signal peptide. C27 carries the N-palmitoyl cysteine lipid modification. The S-diacylglycerol cysteine moiety is linked to residue C27.

It belongs to the bacterial solute-binding protein 3 family. In terms of assembly, the complex is probably composed of two ATP-binding proteins (ArgV), two transmembrane proteins (ArgU) and a solute-binding protein (ArgT).

The protein localises to the cell membrane. Part of the ABC transporter complex ArgTUV involved in L-arginine import. May also transport L-citrulline. Binds L-arginine and its molecular precursor L-citrulline, but not L-histidine, L-glutamate, L-glutamine, L-lysine or L-cysteine. The protein is Arginine-binding protein ArgT of Corynebacterium glutamicum (strain ATCC 13032 / DSM 20300 / JCM 1318 / BCRC 11384 / CCUG 27702 / LMG 3730 / NBRC 12168 / NCIMB 10025 / NRRL B-2784 / 534).